A 486-amino-acid polypeptide reads, in one-letter code: Ribulose bisphosphate carboxylase large chain (486 aa).

Residues asparagine 125 and threonine 175 each coordinate substrate. Lysine 177 acts as the Proton acceptor in catalysis. Lysine 179 is a binding site for substrate. The Mg(2+) site is built by lysine 203, aspartate 205, and glutamate 206. The residue at position 203 (lysine 203) is an N6-carboxylysine. The Proton acceptor role is filled by histidine 295. Substrate-binding residues include arginine 296, histidine 328, and serine 380.

This sequence belongs to the RuBisCO large chain family. Type I subfamily. As to quaternary structure, heterohexadecamer of 8 large chains and 8 small chains. Mg(2+) serves as cofactor.

The catalysed reaction is 2 (2R)-3-phosphoglycerate + 2 H(+) = D-ribulose 1,5-bisphosphate + CO2 + H2O. The enzyme catalyses D-ribulose 1,5-bisphosphate + O2 = 2-phosphoglycolate + (2R)-3-phosphoglycerate + 2 H(+). RuBisCO catalyzes two reactions: the carboxylation of D-ribulose 1,5-bisphosphate, the primary event in carbon dioxide fixation, as well as the oxidative fragmentation of the pentose substrate. Both reactions occur simultaneously and in competition at the same active site. This is Ribulose bisphosphate carboxylase large chain from Cereibacter sphaeroides (Rhodobacter sphaeroides).